Here is a 149-residue protein sequence, read N- to C-terminus: Placenta growth factor (149 aa).

Residues 1–18 (MPTVRLFTCFLQLLTGLV) form the signal peptide. The N-linked (GlcNAc...) asparagine glycan is linked to Asn-33. Intrachain disulfides connect Cys-52–Cys-94, Cys-83–Cys-128, and Cys-87–Cys-130. The N-linked (GlcNAc...) asparagine glycan is linked to Asn-101.

It belongs to the PDGF/VEGF growth factor family. As to quaternary structure, antiparallel homodimer; disulfide-linked. Also found as heterodimer with VEGFA/VEGF.

It is found in the secreted. Its function is as follows. Growth factor active in angiogenesis and endothelial cell growth, stimulating their proliferation and migration. It binds to the receptor FLT1/VEGFR-1. Also promotes cell tumor growth. The sequence is that of Placenta growth factor (PGF) from Bos taurus (Bovine).